Reading from the N-terminus, the 306-residue chain is tRNA pseudouridine synthase B (306 aa).

Aspartate 46 (nucleophile) is an active-site residue.

The protein belongs to the pseudouridine synthase TruB family. Type 1 subfamily.

It catalyses the reaction uridine(55) in tRNA = pseudouridine(55) in tRNA. Functionally, responsible for synthesis of pseudouridine from uracil-55 in the psi GC loop of transfer RNAs. In Gluconacetobacter diazotrophicus (strain ATCC 49037 / DSM 5601 / CCUG 37298 / CIP 103539 / LMG 7603 / PAl5), this protein is tRNA pseudouridine synthase B.